The chain runs to 317 residues: MKGLKNQIMKKTSLFICTLLFISSIVFHPKITFAYPFWAQQNYESPREATGKIVCANCHLAQMPTIAEVPQSVGADSVFKAVVKIPYKNDLKEIGADGSEVPLQVGAVVMLPDGFKLAPQERWTEEIKKETEGVYFTNYSEEKDNIIVVGPLPGDTNKEIVFPVLSPDPSTNKEYHYGKYSLHIGGNRGRGQVYPTGDKSNNVVFTSSSSGTINSIETIEDGSYKVNIEKENGEITTEAVPVGPQLIVKAQDKINAGDPLTNDPNVGGFGQLDAEVVLQSPYRVIGLIAFFIGVGLTQILLVLKKKQVEKVQAAEGI.

A signal peptide spans 1 to 34 (MKGLKNQIMKKTSLFICTLLFISSIVFHPKITFA). Y35, C55, C58, and H59 together coordinate heme. Residues 284–304 (VIGLIAFFIGVGLTQILLVLK) traverse the membrane as a helical segment.

It belongs to the cytochrome f family. As to quaternary structure, the 4 large subunits of the cytochrome b6-f complex are cytochrome b6, subunit IV (17 kDa polypeptide, PetD), cytochrome f and the Rieske protein, while the 4 small subunits are PetG, PetL, PetM and PetN. The complex functions as a dimer. Requires heme as cofactor.

The protein localises to the cellular thylakoid membrane. In terms of biological role, component of the cytochrome b6-f complex, which mediates electron transfer between photosystem II (PSII) and photosystem I (PSI), cyclic electron flow around PSI, and state transitions. The chain is Cytochrome f from Prochlorococcus marinus (strain MIT 9301).